We begin with the raw amino-acid sequence, 532 residues long: Deoxyribodipyrimidine photo-lyase (532 aa).

Residues 1 to 57 are disordered; the sequence is MDSKKRSHSTGGEAENMESQESKAKRKPLQKHQFSKSNVVQKEEKDKTEGEEKGAEG. Over residues 24-34 the composition is skewed to basic residues; the sequence is AKRKPLQKHQF. Positions 41–55 are enriched in basic and acidic residues; sequence QKEEKDKTEGEEKGA. Positions 97–229 constitute a Photolyase/cryptochrome alpha/beta domain; it reads QAFVYWMSRD…QVDAHNIVPC (133 aa). DNA is bound at residue R322. Interaction with DNA stretches follow at residues 368–376 and 442–443; these read EAVVRRELA and GF. 468–470 serves as a coordination point for FAD; sequence YLN.

This sequence belongs to the DNA photolyase class-2 family. The cofactor is FAD.

The enzyme catalyses cyclobutadipyrimidine (in DNA) = 2 pyrimidine residues (in DNA).. Involved in repair of UV radiation-induced DNA damage. Catalyzes the light-dependent monomerization (300-600 nm) of cyclobutyl pyrimidine dimers (in cis-syn configuration), which are formed between adjacent bases on the same DNA strand upon exposure to ultraviolet radiation. The sequence is that of Deoxyribodipyrimidine photo-lyase (PHR) from Potorous tridactylus (Potoroo).